The sequence spans 302 residues: Probable E3 ubiquitin-protein ligase RZFP34 (302 aa).

The segment at 54–130 adopts a CHY-type zinc-finger fold; sequence EGIMQYGCAH…VRQVCISCGV (77 aa). Residues cysteine 61, histidine 63, cysteine 74, cysteine 75, cysteine 81, cysteine 84, histidine 85, histidine 100, cysteine 112, cysteine 115, cysteine 125, cysteine 128, cysteine 137, cysteine 140, histidine 153, cysteine 154, cysteine 157, cysteine 160, histidine 170, cysteine 171, cysteine 174, cysteine 177, histidine 186, and cysteine 188 each contribute to the Zn(2+) site. The CTCHY-type zinc finger occupies 132–196; it reads MGKYFCEVCK…ACVEGAMHHD (65 aa). The RING-type; atypical zinc finger occupies 197 to 240; that stretch reads CPICFEYLFESTNDVSVLPCGHTIHVKCLREMEEHCQFACPLCS.

The protein localises to the nucleus. The enzyme catalyses S-ubiquitinyl-[E2 ubiquitin-conjugating enzyme]-L-cysteine + [acceptor protein]-L-lysine = [E2 ubiquitin-conjugating enzyme]-L-cysteine + N(6)-ubiquitinyl-[acceptor protein]-L-lysine.. The protein operates within protein modification; protein ubiquitination. Functionally, possesses transactivation activity in yeast cells. Involved in the regulation of stomatal aperture. May modulate the expression of genes that control stomata opening during heat shock or drought stress. This chain is Probable E3 ubiquitin-protein ligase RZFP34, found in Oryza sativa subsp. japonica (Rice).